The chain runs to 268 residues: MGEGTPGVDSARVQEEGGRDQSLGFVEGRIQVGRIVTAGQLSLCSEEQSPQPGITRPSPGVVVDGESSGLAEPRVEATPQPPSSIQKRKRDESLDSEDDLAELFEPDPQPVWSVEMLCGLRMRLKRRRVSTVRPEHHKVFTKLLEDPVVKKFLTWDKMLRVSDKYLLSMVIAYFSRAGLFSWQYRPIHFFLALYLANDMEEDNQAPKQDIFYFLYGKSYAQRPMFHKLRFQFIRSMGWKIWVSREECEEIQAYNPDLWVWARDRTNLT.

2 disordered regions span residues 1–26 (MGEG…LGFV) and 43–97 (LCSE…LDSE). The segment covering 43–52 (LCSEEQSPQP) has biased composition (polar residues). Residues 134 to 265 (PEHHKVFTKL…DLWVWARDRT (132 aa)) are speedy/Ringo box; Required for CDK-binding.

It belongs to the Speedy/Ringo family. In terms of assembly, interacts with CDK1. Does not interact with CDK2 in vivo. In terms of tissue distribution, testis-specific.

The protein localises to the nucleus. Its function is as follows. Promotes progression through the cell cycle via binding and activation of CDK1. The protein is Speedy protein E4A of Mus musculus (Mouse).